We begin with the raw amino-acid sequence, 403 residues long: NADH-quinone oxidoreductase subunit D (403 aa).

The protein belongs to the complex I 49 kDa subunit family. As to quaternary structure, NDH-1 is composed of 15 different subunits. Subunits NuoB, C, D, E, F, and G constitute the peripheral sector of the complex.

The protein localises to the cell membrane. It carries out the reaction a quinone + NADH + 5 H(+)(in) = a quinol + NAD(+) + 4 H(+)(out). Functionally, NDH-1 shuttles electrons from NADH, via FMN and iron-sulfur (Fe-S) centers, to quinones in the respiratory chain. The immediate electron acceptor for the enzyme in this species is believed to be a menaquinone. Couples the redox reaction to proton translocation (for every two electrons transferred, four hydrogen ions are translocated across the cytoplasmic membrane), and thus conserves the redox energy in a proton gradient. This Deinococcus geothermalis (strain DSM 11300 / CIP 105573 / AG-3a) protein is NADH-quinone oxidoreductase subunit D.